Consider the following 195-residue polypeptide: MRLCDTDIERYLDDGIISLTPRPNNDKINGATIDVRLGNSFRVFREHSAPFIDLSGPKEEVSAQLESVMSDEIIIPEGEAFFLHPGTLALATTLESVKLPANIIGWLDGRSSLARLGLMVHVTAHRIDPGWEGKIVLEFYNSGKLPLALRPNMVIGALSFEVLSGEXKRPYSSRKDAKYKNQQSAVASRIDEDKE.

DCTP is bound by residues 110-115 (RSSLAR), Asp128, 136-138 (VLE), Tyr171, Lys178, and Gln182. The active-site Proton donor/acceptor is Glu138. Positions 171–195 (YSSRKDAKYKNQQSAVASRIDEDKE) are disordered.

This sequence belongs to the dCTP deaminase family. In terms of assembly, homotrimer.

It carries out the reaction dCTP + H2O + H(+) = dUTP + NH4(+). It functions in the pathway pyrimidine metabolism; dUMP biosynthesis; dUMP from dCTP (dUTP route): step 1/2. Functionally, catalyzes the deamination of dCTP to dUTP. The protein is dCTP deaminase of Haemophilus influenzae (strain ATCC 51907 / DSM 11121 / KW20 / Rd).